The following is a 298-amino-acid chain: Glycine--tRNA ligase alpha subunit (298 aa).

The protein belongs to the class-II aminoacyl-tRNA synthetase family. Tetramer of two alpha and two beta subunits.

It is found in the cytoplasm. The enzyme catalyses tRNA(Gly) + glycine + ATP = glycyl-tRNA(Gly) + AMP + diphosphate. This chain is Glycine--tRNA ligase alpha subunit, found in Helicobacter pylori (strain HPAG1).